Consider the following 88-residue polypeptide: ATP synthase subunit c 1 (88 aa).

2 consecutive transmembrane segments (helical) span residues Phe-4 to Ile-24 and Ile-53 to Leu-73.

It belongs to the ATPase C chain family. F-type ATPases have 2 components, F(1) - the catalytic core - and F(0) - the membrane proton channel. F(1) has five subunits: alpha(3), beta(3), gamma(1), delta(1), epsilon(1). F(0) has three main subunits: a(1), b(2) and c(10-14). The alpha and beta chains form an alternating ring which encloses part of the gamma chain. F(1) is attached to F(0) by a central stalk formed by the gamma and epsilon chains, while a peripheral stalk is formed by the delta and b chains.

It is found in the cell inner membrane. Its function is as follows. F(1)F(0) ATP synthase produces ATP from ADP in the presence of a proton or sodium gradient. F-type ATPases consist of two structural domains, F(1) containing the extramembraneous catalytic core and F(0) containing the membrane proton channel, linked together by a central stalk and a peripheral stalk. During catalysis, ATP synthesis in the catalytic domain of F(1) is coupled via a rotary mechanism of the central stalk subunits to proton translocation. In terms of biological role, key component of the F(0) channel; it plays a direct role in translocation across the membrane. A homomeric c-ring of between 10-14 subunits forms the central stalk rotor element with the F(1) delta and epsilon subunits. In Syntrophotalea carbinolica (strain DSM 2380 / NBRC 103641 / GraBd1) (Pelobacter carbinolicus), this protein is ATP synthase subunit c 1.